A 348-amino-acid polypeptide reads, in one-letter code: L-threonine 3-dehydrogenase (348 aa).

Cys-42 provides a ligand contact to Zn(2+). Residues Thr-44 and His-47 each act as charge relay system in the active site. Zn(2+)-binding residues include His-67, Glu-68, Cys-97, Cys-100, Cys-103, and Cys-111. Residues Leu-179, Glu-199, Arg-204, 266 to 268 (LGL), and 291 to 292 (IT) contribute to the NAD(+) site.

The protein belongs to the zinc-containing alcohol dehydrogenase family. As to quaternary structure, homotetramer. Zn(2+) is required as a cofactor.

Its subcellular location is the cytoplasm. It carries out the reaction L-threonine + NAD(+) = (2S)-2-amino-3-oxobutanoate + NADH + H(+). It functions in the pathway amino-acid degradation; L-threonine degradation via oxydo-reductase pathway; glycine from L-threonine: step 1/2. Its function is as follows. Catalyzes the NAD(+)-dependent oxidation of L-threonine to 2-amino-3-ketobutyrate. To a lesser extent, also catalyzes the oxidation of L-serine, D-threonine, butan-2,3-diol, butan-1,2-diol, and propan-1,2-diol and cannot oxidize other L-amino acids. Cannot utilize NADP(H) instead of NAD(H). The polypeptide is L-threonine 3-dehydrogenase (Pyrococcus furiosus (strain ATCC 43587 / DSM 3638 / JCM 8422 / Vc1)).